Here is a 360-residue protein sequence, read N- to C-terminus: Bifunctional protein FolD 4, chloroplastic (360 aa).

A chloroplast-targeting transit peptide spans Met-1 to Ser-51. At Ser-52 the chain carries N-acetylserine.

This sequence belongs to the tetrahydrofolate dehydrogenase/cyclohydrolase family. As to quaternary structure, homodimer.

Its subcellular location is the plastid. The protein resides in the chloroplast. It catalyses the reaction (6R)-5,10-methylene-5,6,7,8-tetrahydrofolate + NADP(+) = (6R)-5,10-methenyltetrahydrofolate + NADPH. The catalysed reaction is (6R)-5,10-methenyltetrahydrofolate + H2O = (6R)-10-formyltetrahydrofolate + H(+). The protein operates within one-carbon metabolism; tetrahydrofolate interconversion. Its function is as follows. Catalyzes the oxidation of 5,10-methylenetetrahydrofolate to 5,10-methenyltetrahydrofolate and then the hydrolysis of 5,10-methenyltetrahydrofolate to 10-formyltetrahydrofolate. This is Bifunctional protein FolD 4, chloroplastic (FOLD4) from Arabidopsis thaliana (Mouse-ear cress).